The chain runs to 1431 residues: Probable ATP-dependent RNA helicase spindle-E (1431 aa).

In terms of domain architecture, Helicase ATP-binding spans 127–294 (LAAIRENPVV…FAMSSSLPPV (168 aa)). Residue 140–147 (GETGCGKT) participates in ATP binding. Positions 240–243 (DEVH) match the DEAH box motif. One can recognise a Helicase C-terminal domain in the interval 354 to 526 (QSQQSYEEAK…NSVLKAKELE (173 aa)). One can recognise a Tudor domain in the interval 937–1000 (AKAVTKGLQL…RLMSPQLKRD (64 aa)).

The protein belongs to the DEAD box helicase family. DEAH subfamily.

The protein resides in the cytoplasm. It carries out the reaction ATP + H2O = ADP + phosphate + H(+). Functionally, probable ATP-binding RNA helicase which plays a central role during spermatogenesis and oogenesis by repressing transposable elements and preventing their mobilization, which is essential for the germline integrity. Acts via the piRNA metabolic process, which mediates the repression of transposable elements during meiosis by forming complexes composed of piRNAs and Piwi and govern the methylation and subsequent repression of transposons. Involved in the repression of LTR retrotransposon copia. Also involved in telomere regulation by repressing specialized telomeric retroelements HeT-A, TAHRE, and TART; Drosophila telomeres being maintained by transposition of specialized telomeric retroelements. Involved in telomeric trans-silencing, a repression mechanism by which a transposon or a transgene inserted in subtelomeric heterochromatin has the capacity to repress in trans in the female germline, a homologous transposon, or transgene located in euchromatin. Involved in the repression of testis-expressed Stellate genes by the homologous Su(Ste) repeats. Required for anteroposterior and dorsoventral axis formation during oogenesis. The sequence is that of Probable ATP-dependent RNA helicase spindle-E (spn-E) from Drosophila mojavensis (Fruit fly).